A 184-amino-acid polypeptide reads, in one-letter code: Ubiquitin-conjugating enzyme E2-23 kDa (184 aa).

Positions Met1 to Lys148 constitute a UBC core domain. The active-site Glycyl thioester intermediate is the Cys85. The interval Tyr146–Pro184 is disordered. Acidic residues predominate over residues Ile152 to Asp175.

It belongs to the ubiquitin-conjugating enzyme family.

The enzyme catalyses S-ubiquitinyl-[E1 ubiquitin-activating enzyme]-L-cysteine + [E2 ubiquitin-conjugating enzyme]-L-cysteine = [E1 ubiquitin-activating enzyme]-L-cysteine + S-ubiquitinyl-[E2 ubiquitin-conjugating enzyme]-L-cysteine.. It participates in protein modification; protein ubiquitination. Catalyzes the covalent attachment of ubiquitin to other proteins. The sequence is that of Ubiquitin-conjugating enzyme E2-23 kDa (UBC4) from Triticum aestivum (Wheat).